The following is a 283-amino-acid chain: Putative pyruvate, phosphate dikinase regulatory protein (283 aa).

156–163 serves as a coordination point for ADP; that stretch reads GLSRAGKT.

Belongs to the pyruvate, phosphate/water dikinase regulatory protein family. PDRP subfamily.

The catalysed reaction is N(tele)-phospho-L-histidyl/L-threonyl-[pyruvate, phosphate dikinase] + ADP = N(tele)-phospho-L-histidyl/O-phospho-L-threonyl-[pyruvate, phosphate dikinase] + AMP + H(+). The enzyme catalyses N(tele)-phospho-L-histidyl/O-phospho-L-threonyl-[pyruvate, phosphate dikinase] + phosphate + H(+) = N(tele)-phospho-L-histidyl/L-threonyl-[pyruvate, phosphate dikinase] + diphosphate. Bifunctional serine/threonine kinase and phosphorylase involved in the regulation of the pyruvate, phosphate dikinase (PPDK) by catalyzing its phosphorylation/dephosphorylation. In Desulfotalea psychrophila (strain LSv54 / DSM 12343), this protein is Putative pyruvate, phosphate dikinase regulatory protein.